A 228-amino-acid chain; its full sequence is MKPTRPFHQTPVITIDGPTASGKGTVAALVAAELGFHLLDSGALYRLAALASVRYDIAADDAEALAKLVGELHITFREGIAQLDGADVSTDIRAEEIGNRASAIAIHAPVRAALVARQRAFRKQPGLVADGRDMGTVIFPDAALKVFLTASVEARATRRHKQLIQKGFSANMDDLLRDLRERDERDSQRAAAPLKPAADAQLLDTSALSVDQAVEQVVQWYRALVPQS.

17-25 contributes to the ATP binding site; sequence GPTASGKGT.

It belongs to the cytidylate kinase family. Type 1 subfamily.

It is found in the cytoplasm. It carries out the reaction CMP + ATP = CDP + ADP. The catalysed reaction is dCMP + ATP = dCDP + ADP. This is Cytidylate kinase from Paraburkholderia phymatum (strain DSM 17167 / CIP 108236 / LMG 21445 / STM815) (Burkholderia phymatum).